Reading from the N-terminus, the 282-residue chain is tRNA uridine(34) hydroxylase (282 aa).

Positions 128–222 constitute a Rhodanese domain; sequence EGRPVVMLDT…YFEEVGGSHY (95 aa). Residue Cys182 is the Cysteine persulfide intermediate of the active site.

It belongs to the TrhO family.

It carries out the reaction uridine(34) in tRNA + AH2 + O2 = 5-hydroxyuridine(34) in tRNA + A + H2O. Catalyzes oxygen-dependent 5-hydroxyuridine (ho5U) modification at position 34 in tRNAs. The chain is tRNA uridine(34) hydroxylase from Cupriavidus necator (strain ATCC 17699 / DSM 428 / KCTC 22496 / NCIMB 10442 / H16 / Stanier 337) (Ralstonia eutropha).